Reading from the N-terminus, the 202-residue chain is Protein-methionine-sulfoxide reductase heme-binding subunit MsrQ (202 aa).

Transmembrane regions (helical) follow at residues Tyr-8–Trp-28, Leu-50–Trp-70, Ile-76–Leu-96, Pro-114–Gly-134, Leu-148–Val-168, and Gly-174–Ala-194.

The protein belongs to the MsrQ family. As to quaternary structure, heterodimer of a catalytic subunit (MsrP) and a heme-binding subunit (MsrQ). FMN is required as a cofactor. It depends on heme b as a cofactor.

It is found in the cell membrane. Its function is as follows. Part of the MsrPQ system that repairs oxidized cell envelope proteins containing methionine sulfoxide residues (Met-O), using respiratory chain electrons. Thus protects these proteins from oxidative-stress damage caused by reactive species of oxygen and chlorine. MsrPQ is essential for the maintenance of envelope integrity under bleach stress, rescuing a wide series of structurally unrelated cell envelope proteins from methionine oxidation. MsrQ provides electrons for reduction to the reductase catalytic subunit MsrP, using the quinone pool of the respiratory chain. The chain is Protein-methionine-sulfoxide reductase heme-binding subunit MsrQ from Deinococcus radiodurans (strain ATCC 13939 / DSM 20539 / JCM 16871 / CCUG 27074 / LMG 4051 / NBRC 15346 / NCIMB 9279 / VKM B-1422 / R1).